The primary structure comprises 554 residues: (Z)-gamma-bisabolene synthase 2 (554 aa).

4 residues coordinate Mg(2+): Asp-306, Asp-310, Asp-450, and Asp-458. A DDXXD motif motif is present at residues 306 to 310 (DDACD).

This sequence belongs to the terpene synthase family. Tpsa subfamily. Mg(2+) is required as a cofactor. Requires Mn(2+) as cofactor. As to expression, predominantly expressed in roots. Expressed in the cortex and the sub-epidermal layers of roots. Also detected in leaf hydathodes and flower stigmata.

It is found in the cytoplasm. It carries out the reaction (2E,6E)-farnesyl diphosphate = (Z)-gamma-bisabolene + diphosphate. Its pathway is secondary metabolite biosynthesis; terpenoid biosynthesis. Functionally, involved in sesquiterpene (C15) biosynthesis. The major product is (Z)-gamma-bisabolene with minor amounts of (E)-nerolidol and alpha-bisabolol. This chain is (Z)-gamma-bisabolene synthase 2 (TPS13), found in Arabidopsis thaliana (Mouse-ear cress).